We begin with the raw amino-acid sequence, 281 residues long: Elongation factor Ts (281 aa).

The involved in Mg(2+) ion dislocation from EF-Tu stretch occupies residues 86-89 (TDFV).

It belongs to the EF-Ts family.

The protein resides in the cytoplasm. Its function is as follows. Associates with the EF-Tu.GDP complex and induces the exchange of GDP to GTP. It remains bound to the aminoacyl-tRNA.EF-Tu.GTP complex up to the GTP hydrolysis stage on the ribosome. This Beutenbergia cavernae (strain ATCC BAA-8 / DSM 12333 / CCUG 43141 / JCM 11478 / NBRC 16432 / NCIMB 13614 / HKI 0122) protein is Elongation factor Ts.